The primary structure comprises 315 residues: Acetyl-coenzyme A carboxylase carboxyl transferase subunit alpha (315 aa).

Residues 32-293 form the CoA carboxyltransferase C-terminal domain; sequence NISDEIARLQ…RADLVQQLDM (262 aa).

It belongs to the AccA family. In terms of assembly, acetyl-CoA carboxylase is a heterohexamer composed of biotin carboxyl carrier protein (AccB), biotin carboxylase (AccC) and two subunits each of ACCase subunit alpha (AccA) and ACCase subunit beta (AccD).

It localises to the cytoplasm. It carries out the reaction N(6)-carboxybiotinyl-L-lysyl-[protein] + acetyl-CoA = N(6)-biotinyl-L-lysyl-[protein] + malonyl-CoA. It participates in lipid metabolism; malonyl-CoA biosynthesis; malonyl-CoA from acetyl-CoA: step 1/1. Component of the acetyl coenzyme A carboxylase (ACC) complex. First, biotin carboxylase catalyzes the carboxylation of biotin on its carrier protein (BCCP) and then the CO(2) group is transferred by the carboxyltransferase to acetyl-CoA to form malonyl-CoA. The sequence is that of Acetyl-coenzyme A carboxylase carboxyl transferase subunit alpha from Pseudomonas putida (strain ATCC 47054 / DSM 6125 / CFBP 8728 / NCIMB 11950 / KT2440).